The primary structure comprises 556 residues: Formate--tetrahydrofolate ligase 1 (556 aa).

65-72 (TPAGEGKS) contributes to the ATP binding site.

It belongs to the formate--tetrahydrofolate ligase family.

The enzyme catalyses (6S)-5,6,7,8-tetrahydrofolate + formate + ATP = (6R)-10-formyltetrahydrofolate + ADP + phosphate. Its pathway is one-carbon metabolism; tetrahydrofolate interconversion. The polypeptide is Formate--tetrahydrofolate ligase 1 (Streptococcus pyogenes serotype M1).